We begin with the raw amino-acid sequence, 172 residues long: Protein-export protein SecB (172 aa).

The disordered stretch occupies residues 153–172 (AQGQGGDSGIVMPDGSQARH).

This sequence belongs to the SecB family. As to quaternary structure, homotetramer, a dimer of dimers. One homotetramer interacts with 1 SecA dimer.

The protein resides in the cytoplasm. Functionally, one of the proteins required for the normal export of preproteins out of the cell cytoplasm. It is a molecular chaperone that binds to a subset of precursor proteins, maintaining them in a translocation-competent state. It also specifically binds to its receptor SecA. In Cupriavidus metallidurans (strain ATCC 43123 / DSM 2839 / NBRC 102507 / CH34) (Ralstonia metallidurans), this protein is Protein-export protein SecB.